Reading from the N-terminus, the 453-residue chain is Ribulose bisphosphate carboxylase large chain (453 aa).

A propeptide spanning residues 1 to 2 (MS) is cleaved from the precursor. The residue at position 3 (proline 3) is an N-acetylproline. Lysine 14 is subject to N6,N6,N6-trimethyllysine. Asparagine 123 and threonine 173 together coordinate substrate. Lysine 175 acts as the Proton acceptor in catalysis. Lysine 177 provides a ligand contact to substrate. Residues lysine 201, aspartate 203, and glutamate 204 each coordinate Mg(2+). Lysine 201 bears the N6-carboxylysine mark. Histidine 294 acts as the Proton acceptor in catalysis. Substrate-binding residues include arginine 295, histidine 327, and serine 379.

This sequence belongs to the RuBisCO large chain family. Type I subfamily. As to quaternary structure, heterohexadecamer of 8 large chains and 8 small chains; disulfide-linked. The disulfide link is formed within the large subunit homodimers. It depends on Mg(2+) as a cofactor. In terms of processing, the disulfide bond which can form in the large chain dimeric partners within the hexadecamer appears to be associated with oxidative stress and protein turnover.

The protein localises to the plastid. It is found in the chloroplast. The enzyme catalyses 2 (2R)-3-phosphoglycerate + 2 H(+) = D-ribulose 1,5-bisphosphate + CO2 + H2O. It carries out the reaction D-ribulose 1,5-bisphosphate + O2 = 2-phosphoglycolate + (2R)-3-phosphoglycerate + 2 H(+). Functionally, ruBisCO catalyzes two reactions: the carboxylation of D-ribulose 1,5-bisphosphate, the primary event in carbon dioxide fixation, as well as the oxidative fragmentation of the pentose substrate in the photorespiration process. Both reactions occur simultaneously and in competition at the same active site. The sequence is that of Ribulose bisphosphate carboxylase large chain from Sherardia arvensis (Blue field-madder).